The sequence spans 334 residues: Serine/threonine-protein kinase (334 aa).

Residues 53 to 333 (FEVLQPLQSG…DEILNFGMWT (281 aa)) form the Protein kinase domain. Residues 59-67 (LQSGSEGRV) and Lys82 contribute to the ATP site. Asp167 acts as the Proton acceptor in catalysis.

It belongs to the protein kinase superfamily. Ser/Thr protein kinase family.

It catalyses the reaction L-seryl-[protein] + ATP = O-phospho-L-seryl-[protein] + ADP + H(+). The catalysed reaction is L-threonyl-[protein] + ATP = O-phospho-L-threonyl-[protein] + ADP + H(+). Its function is as follows. Able to phosphorylate in vitro the major virion phosphoprotein phosphorylated in vivo. The chain is Serine/threonine-protein kinase (PK) from Sus scrofa (Pig).